The sequence spans 492 residues: 3-octaprenyl-4-hydroxybenzoate carboxy-lyase (492 aa).

N175 contacts Mn(2+). Prenylated FMN is bound by residues 178–180 (IYR), 192–194 (RWL), and 197–198 (RG). E241 lines the Mn(2+) pocket. D290 acts as the Proton donor in catalysis.

Belongs to the UbiD family. Homohexamer. It depends on prenylated FMN as a cofactor. The cofactor is Mn(2+).

It localises to the cell membrane. The catalysed reaction is a 4-hydroxy-3-(all-trans-polyprenyl)benzoate + H(+) = a 2-(all-trans-polyprenyl)phenol + CO2. The protein operates within cofactor biosynthesis; ubiquinone biosynthesis. Its function is as follows. Catalyzes the decarboxylation of 3-octaprenyl-4-hydroxy benzoate to 2-octaprenylphenol, an intermediate step in ubiquinone biosynthesis. The chain is 3-octaprenyl-4-hydroxybenzoate carboxy-lyase from Salmonella typhi.